The sequence spans 127 residues: MATVSRKKKKVKVTPEGVVHIKASFNNIMVTITDVQGNTVSWSSAGKNGFRGSKKNTPYASQVTSEGAAKEAYDLGMRHVDVFIKGPGAGRDAAIRALQGAGLEVRSIKDITPLPHNGCRPPKRRRV.

This sequence belongs to the universal ribosomal protein uS11 family. As to quaternary structure, part of the 30S ribosomal subunit. Interacts with proteins S7 and S18. Binds to IF-3.

In terms of biological role, located on the platform of the 30S subunit, it bridges several disparate RNA helices of the 16S rRNA. Forms part of the Shine-Dalgarno cleft in the 70S ribosome. This chain is Small ribosomal subunit protein uS11, found in Chlorobium luteolum (strain DSM 273 / BCRC 81028 / 2530) (Pelodictyon luteolum).